The following is a 180-amino-acid chain: MSRLILDEQAIRRATTRIAHEIIERNKGVSDCLLVGIKTRGIYLANRLQERIETIEGIKLPVGEVDITLYRDDLTVKSTTEEPILQGTDVPVDVTGKKVILIDDVLYTGRTVRAALDALMDLGRPEQIQLAVLIDRGHRELPIRPDYVGKNVPTSKQEQIVAKLSEVDGIDEVTIEQKTS.

Substrate-binding positions include 39–40 (TR), 103–111 (DDVLYTGRT), and R136. The short motif at 99–111 (VILIDDVLYTGRT) is the PRPP-binding element.

It belongs to the purine/pyrimidine phosphoribosyltransferase family. PyrR subfamily. In terms of assembly, homodimer and homohexamer; in equilibrium.

It carries out the reaction UMP + diphosphate = 5-phospho-alpha-D-ribose 1-diphosphate + uracil. Regulates transcriptional attenuation of the pyrimidine nucleotide (pyr) operon by binding in a uridine-dependent manner to specific sites on pyr mRNA. This disrupts an antiterminator hairpin in the RNA and favors formation of a downstream transcription terminator, leading to a reduced expression of downstream genes. Functionally, also displays a weak uracil phosphoribosyltransferase activity which is not physiologically significant. The chain is Bifunctional protein PyrR from Halalkalibacterium halodurans (strain ATCC BAA-125 / DSM 18197 / FERM 7344 / JCM 9153 / C-125) (Bacillus halodurans).